The primary structure comprises 205 residues: Small ribosomal subunit protein uS4 (205 aa).

The segment at 18–45 is disordered; sequence NIWGRPKSPVNRREYGPGQHGQRRKGKL. The S4 RNA-binding domain occupies 94-157; sequence RRLDTVVYRA…KQLAFVLEAS (64 aa).

Belongs to the universal ribosomal protein uS4 family. In terms of assembly, part of the 30S ribosomal subunit. Contacts protein S5. The interaction surface between S4 and S5 is involved in control of translational fidelity.

In terms of biological role, one of the primary rRNA binding proteins, it binds directly to 16S rRNA where it nucleates assembly of the body of the 30S subunit. With S5 and S12 plays an important role in translational accuracy. The protein is Small ribosomal subunit protein uS4 of Rhodopseudomonas palustris (strain BisA53).